The chain runs to 165 residues: Growth arrest and DNA damage-inducible protein GADD45 alpha (165 aa).

Phosphothreonine is present on threonine 2.

It belongs to the GADD45 family. In terms of assembly, interacts with AURKA, PCNA, GADD45GIP1 and MAPK14.

Its subcellular location is the nucleus. In terms of biological role, might affect PCNA interaction with some CDK (cell division protein kinase) complexes; stimulates DNA excision repair in vitro and inhibits entry of cells into S phase. In T-cells, functions as a regulator of p38 MAPKs by inhibiting p88 phosphorylation and activity. This chain is Growth arrest and DNA damage-inducible protein GADD45 alpha (GADD45A), found in Felis catus (Cat).